The following is a 218-amino-acid chain: Cell division protein SepF (218 aa).

Residues 20–81 (DDEYYDDRAP…GYRGGYADEP (62 aa)) are disordered. Residues 36–65 (PRFDDDYGRYDGRDYDDARSDSRGDLRGEP) show a composition bias toward basic and acidic residues.

This sequence belongs to the SepF family. In terms of assembly, homodimer. Interacts with FtsZ.

The protein resides in the cytoplasm. Its function is as follows. Cell division protein that is part of the divisome complex and is recruited early to the Z-ring. Probably stimulates Z-ring formation, perhaps through the cross-linking of FtsZ protofilaments. Its function overlaps with FtsA. This chain is Cell division protein SepF, found in Mycobacterium bovis (strain ATCC BAA-935 / AF2122/97).